The sequence spans 263 residues: MPEGPEIRRAADNLEAAIKGKPLTDVWFAFPQLKPYQSQLIGQHVTHVETRGKALLTHFSNDLTLYSHNQLYGVWRVVDTGEEPQTTRVLRVKLQTADKTILLYSASDIEMLTPEQLTTHPFLQRVGPDVLDPNLTPEVVKERLLSPRFRNRQFAGLLLDQAFLAGLGNYLRVEILWQVGLTGNHKAKDLNAAQLDALAHALLEIPRFSYATRGQVDENKHHGALFRFKVFHRDGEPCERCGSIIEKTTLSSRPFYWCPGCQH.

P2 acts as the Schiff-base intermediate with DNA in catalysis. The Proton donor role is filled by E3. K53 acts as the Proton donor; for beta-elimination activity in catalysis. Residues Q70, R125, and N169 each contribute to the DNA site. An FPG-type zinc finger spans residues 229 to 263 (KVFHRDGEPCERCGSIIEKTTLSSRPFYWCPGCQH). The active-site Proton donor; for delta-elimination activity is R253.

The protein belongs to the FPG family. Requires Zn(2+) as cofactor.

The catalysed reaction is 2'-deoxyribonucleotide-(2'-deoxyribose 5'-phosphate)-2'-deoxyribonucleotide-DNA = a 3'-end 2'-deoxyribonucleotide-(2,3-dehydro-2,3-deoxyribose 5'-phosphate)-DNA + a 5'-end 5'-phospho-2'-deoxyribonucleoside-DNA + H(+). Functionally, involved in base excision repair of DNA damaged by oxidation or by mutagenic agents. Acts as a DNA glycosylase that recognizes and removes damaged bases. Has a preference for oxidized pyrimidines, such as thymine glycol, 5,6-dihydrouracil and 5,6-dihydrothymine. Has AP (apurinic/apyrimidinic) lyase activity and introduces nicks in the DNA strand. Cleaves the DNA backbone by beta-delta elimination to generate a single-strand break at the site of the removed base with both 3'- and 5'-phosphates. The chain is Endonuclease 8 from Escherichia coli (strain K12 / MC4100 / BW2952).